The primary structure comprises 368 residues: Histidinol-phosphate aminotransferase (368 aa).

The residue at position 228 (K228) is an N6-(pyridoxal phosphate)lysine.

Belongs to the class-II pyridoxal-phosphate-dependent aminotransferase family. Histidinol-phosphate aminotransferase subfamily. Requires pyridoxal 5'-phosphate as cofactor.

The catalysed reaction is L-histidinol phosphate + 2-oxoglutarate = 3-(imidazol-4-yl)-2-oxopropyl phosphate + L-glutamate. It participates in amino-acid biosynthesis; L-histidine biosynthesis; L-histidine from 5-phospho-alpha-D-ribose 1-diphosphate: step 7/9. The chain is Histidinol-phosphate aminotransferase from Methanosarcina mazei (strain ATCC BAA-159 / DSM 3647 / Goe1 / Go1 / JCM 11833 / OCM 88) (Methanosarcina frisia).